We begin with the raw amino-acid sequence, 301 residues long: Structure-specific endonuclease subunit SLX1 (301 aa).

One can recognise a GIY-YIG domain in the interval 12–95; sequence AFYCCYLLRS…QHPYQTRFIK (84 aa). The SLX1-type zinc finger occupies 216 to 283; sequence CAICEKIVDY…IPTSGQCPNC (68 aa).

It belongs to the SLX1 family. Forms a heterodimer with SLX4. A divalent metal cation serves as cofactor.

It localises to the nucleus. Functionally, catalytic subunit of the SLX1-SLX4 structure-specific endonuclease that resolves DNA secondary structures generated during DNA repair and recombination. Has endonuclease activity towards branched DNA substrates, introducing single-strand cuts in duplex DNA close to junctions with ss-DNA. The chain is Structure-specific endonuclease subunit SLX1 from Eremothecium gossypii (strain ATCC 10895 / CBS 109.51 / FGSC 9923 / NRRL Y-1056) (Yeast).